The chain runs to 304 residues: UDP-3-O-acyl-N-acetylglucosamine deacetylase (304 aa).

3 residues coordinate Zn(2+): His-79, His-238, and Asp-242. The active-site Proton donor is the His-265.

This sequence belongs to the LpxC family. It depends on Zn(2+) as a cofactor.

The enzyme catalyses a UDP-3-O-[(3R)-3-hydroxyacyl]-N-acetyl-alpha-D-glucosamine + H2O = a UDP-3-O-[(3R)-3-hydroxyacyl]-alpha-D-glucosamine + acetate. It participates in glycolipid biosynthesis; lipid IV(A) biosynthesis; lipid IV(A) from (3R)-3-hydroxytetradecanoyl-[acyl-carrier-protein] and UDP-N-acetyl-alpha-D-glucosamine: step 2/6. Catalyzes the hydrolysis of UDP-3-O-myristoyl-N-acetylglucosamine to form UDP-3-O-myristoylglucosamine and acetate, the committed step in lipid A biosynthesis. In Pseudoalteromonas atlantica (strain T6c / ATCC BAA-1087), this protein is UDP-3-O-acyl-N-acetylglucosamine deacetylase.